Here is a 212-residue protein sequence, read N- to C-terminus: Putative inactive 6-phospho-alpha-glucosidase (212 aa).

4–70 (FSVVVAGGGS…PDIAFSYTTD (67 aa)) is an NAD(+) binding site. C169 and H200 together coordinate Mn(2+).

The protein belongs to the glycosyl hydrolase 4 family.

This Escherichia coli (strain K12) protein is Putative inactive 6-phospho-alpha-glucosidase.